We begin with the raw amino-acid sequence, 833 residues long: Leucine--tRNA ligase (833 aa).

The short motif at 41-52 is the 'HIGH' region element; sequence PYPSGAGLHVGH. The 'KMSKS' region motif lies at 610–614; that stretch reads KMSKS. Lysine 613 contributes to the ATP binding site.

Belongs to the class-I aminoacyl-tRNA synthetase family.

It localises to the cytoplasm. The enzyme catalyses tRNA(Leu) + L-leucine + ATP = L-leucyl-tRNA(Leu) + AMP + diphosphate. The protein is Leucine--tRNA ligase of Streptococcus gordonii (strain Challis / ATCC 35105 / BCRC 15272 / CH1 / DL1 / V288).